The primary structure comprises 526 residues: Organic cation/carnitine transporter 4 (526 aa).

Residues 1–52 lie on the Cytoplasmic side of the membrane; the sequence is MESPEDRNGNDVRQPLLEKIPVKKEAEGEERLCIDEMLQRYCGEFGRWQLKH. The chain crosses the membrane as a helical span at residues 53–73; the sequence is FVLTCIAWALEAFHTMVMIFA. At 74–123 the chain is on the extracellular side; that stretch reads DQEPEWRCVGSDCRVGSLNCELDPSSWEWTAGKGSSTVSEWGLICGDKYK. The helical transmembrane segment at 124-144 threads the bilayer; sequence VGLVQALFFAGCMIGAGVFGH. At 145-153 the chain is on the cytoplasmic side; sequence LSDSKLGRK. Residues 154-174 form a helical membrane-spanning segment; the sequence is GSLTVVCIINAIFGIATAFSP. Residues 175-179 lie on the Extracellular side of the membrane; sequence NYWTY. The chain crosses the membrane as a helical span at residues 180-200; the sequence is VVLRFLTGFSTGGVGLTAFVL. Position 201–208 (201–208) interacts with ATP; that stretch reads ATEPIGPS. The Cytoplasmic portion of the chain corresponds to 201–214; it reads ATEPIGPSKRGVAG. Residues 215–235 form a helical membrane-spanning segment; sequence MSTFYFFSAGIAVLSGIAYVF. The Extracellular portion of the chain corresponds to 236 to 240; it reads RSWRE. The chain crosses the membrane as a helical span at residues 241 to 261; that stretch reads LFIVSSLPSLLFLLIVIPFIS. Residues 262 to 331 lie on the Cytoplasmic side of the membrane; that stretch reads ESPRWYLVRG…ILSPLMRMRL (70 aa). The helical transmembrane segment at 332-352 threads the bilayer; the sequence is VISVAISFTVSIVYYGLSLNV. Topologically, residues 353 to 360 are extracellular; that stretch reads GNLKTNLY. Residues 361–381 traverse the membrane as a helical segment; sequence LNVFVNAVSEMPAFAITAVLL. Topologically, residues 382-390 are cytoplasmic; the sequence is DKYGRKPLS. Residues 391–411 traverse the membrane as a helical segment; sequence IGTQWFSCVFCLVGFSVWGAG. Residues 412-418 are Extracellular-facing; it reads PWKSVRM. Residues 419 to 439 form a helical membrane-spanning segment; it reads VSGVLGIFGMAGTYNLLFIYI. The Cytoplasmic portion of the chain corresponds to 440–451; it reads AELFPTVVRNAA. A helical membrane pass occupies residues 452–472; that stretch reads LGCATQAAQMGAILAPFVVVL. Residues 473–475 are Extracellular-facing; it reads GEE. The helical transmembrane segment at 476 to 496 threads the bilayer; it reads LPFGVFAVCGLVGGGLAFYLP. The Cytoplasmic portion of the chain corresponds to 497–526; the sequence is ETLNKPLYDTMFGMHEAESESNRERGEVIC.

This sequence belongs to the major facilitator (TC 2.A.1) superfamily. Organic cation transporter (TC 2.A.1.19) family. Mostly expressed in siliques, and, to a lower extent, in stems, leaves, flowers and siliques. Present in pollen. In the stems of secondary inflorescences present in the phloem cells and xylem parenchyma cells.

It localises to the vacuole membrane. Its function is as follows. High affinity carnitine transporter involved in the active cellular uptake of carnitine. Also transports organic cations. In Arabidopsis thaliana (Mouse-ear cress), this protein is Organic cation/carnitine transporter 4 (OCT4).